Here is a 223-residue protein sequence, read N- to C-terminus: UPF0758 protein FMG_0357 (223 aa).

The MPN domain occupies 101–223; that stretch reads SLNDPDSVAE…SLSMRKGMYF (123 aa). Positions 172, 174, and 185 each coordinate Zn(2+). The short motif at 172-185 is the JAMM motif element; sequence HNHPSGSLIPSNAD.

It belongs to the UPF0758 family.

This is UPF0758 protein FMG_0357 from Finegoldia magna (strain ATCC 29328 / DSM 20472 / WAL 2508) (Peptostreptococcus magnus).